A 248-amino-acid polypeptide reads, in one-letter code: Triosephosphate isomerase (248 aa).

Residue 9 to 11 (NWK) coordinates substrate. Catalysis depends on histidine 101, which acts as the Electrophile. Glutamate 170 acts as the Proton acceptor in catalysis. Substrate-binding positions include glycine 176, serine 208, and 229–230 (GG).

This sequence belongs to the triosephosphate isomerase family. In terms of assembly, homodimer.

Its subcellular location is the cytoplasm. It carries out the reaction D-glyceraldehyde 3-phosphate = dihydroxyacetone phosphate. It functions in the pathway carbohydrate biosynthesis; gluconeogenesis. It participates in carbohydrate degradation; glycolysis; D-glyceraldehyde 3-phosphate from glycerone phosphate: step 1/1. Its function is as follows. Involved in the gluconeogenesis. Catalyzes stereospecifically the conversion of dihydroxyacetone phosphate (DHAP) to D-glyceraldehyde-3-phosphate (G3P). This chain is Triosephosphate isomerase, found in Mycoplasmopsis pulmonis (strain UAB CTIP) (Mycoplasma pulmonis).